A 749-amino-acid polypeptide reads, in one-letter code: Protein lin-54 homolog (749 aa).

Lysine 139 is covalently cross-linked (Glycyl lysine isopeptide (Lys-Gly) (interchain with G-Cter in SUMO2)). Lysine 244 and lysine 249 each carry N6-acetyllysine. Residues serine 264, serine 282, serine 310, and serine 314 each carry the phosphoserine modification. A Glycyl lysine isopeptide (Lys-Gly) (interchain with G-Cter in SUMO2) cross-link involves residue lysine 357. In terms of domain architecture, CRC spans 521–634 (PRKPCNCTKS…KCIGCKNFEE (114 aa)). The tract at residues 523-536 (KPCNCTKSLCLKLY) is DNA-binding. Positions 525, 527, 532, 537, 539, 546, 549, 551, and 554 each coordinate Zn(2+). The tract at residues 583–596 (IGKGKEGESDRRHS) is linker. Positions 599, 601, 606, 611, 613, 620, 624, 626, and 629 each coordinate Zn(2+). A DNA-binding region spans residues 599 to 612 (CNCKRSGCLKNYCE). Phosphoserine is present on serine 635. Residues lysine 639, lysine 659, and lysine 661 each participate in a glycyl lysine isopeptide (Lys-Gly) (interchain with G-Cter in SUMO2) cross-link.

It belongs to the lin-54 family. Component of the DREAM complex (also named LINC complex) at least composed of E2F4, E2F5, LIN9, LIN37, LIN52, LIN54, MYBL1, MYBL2, RBL1, RBL2, RBBP4, RBL2, TFDP1 and TFDP2. The complex exists in quiescent cells where it represses cell cycle-dependent genes. It dissociates in S phase when LIN9, LIN37, LIN52 and LIN54 form a subcomplex that binds to MYBL2.

The protein resides in the nucleus. Functionally, component of the DREAM complex, a multiprotein complex that can both act as a transcription activator or repressor depending on the context. In G0 phase, the complex binds to more than 800 promoters and is required for repression of E2F target genes. In S phase, the complex selectively binds to the promoters of G2/M genes whose products are required for mitosis and participates in their cell cycle dependent activation. In the complex, acts as a DNA-binding protein that binds the promoter of CDK1 in a sequence-specific manner. Specifically recognizes the consensus motif 5'-TTYRAA-3' in target DNA. This is Protein lin-54 homolog (Lin54) from Mus musculus (Mouse).